Here is a 92-residue protein sequence, read N- to C-terminus: Small ribosomal subunit protein uS19 (92 aa).

This sequence belongs to the universal ribosomal protein uS19 family.

Functionally, protein S19 forms a complex with S13 that binds strongly to the 16S ribosomal RNA. The chain is Small ribosomal subunit protein uS19 from Sinorhizobium medicae (strain WSM419) (Ensifer medicae).